Here is a 484-residue protein sequence, read N- to C-terminus: Vanillin dehydrogenase (484 aa).

Residues 156–157 (WN), 180–183 (KPAS), and 234–235 (GS) contribute to the NADP(+) site. NAD(+) is bound by residues lysine 180 and 234–239 (GSTPVG). Glutamate 258 functions as the Proton acceptor in the catalytic mechanism. Leucine 259 serves as a coordination point for NADP(+). Residue cysteine 292 is the Nucleophile of the active site. NAD(+) contacts are provided by glutamine 339 and glutamate 386. NADP(+) is bound at residue glutamate 386.

It belongs to the aldehyde dehydrogenase family. In terms of assembly, exists as a homodimer, homotrimer and homotetramer.

It carries out the reaction vanillin + NAD(+) + H2O = vanillate + NADH + 2 H(+). It catalyses the reaction vanillin + NADP(+) + H2O = vanillate + NADPH + 2 H(+). The catalysed reaction is 3,4-dihydroxybenzaldehyde + NAD(+) + H2O = 3,4-dihydroxybenzoate + NADH + 2 H(+). The enzyme catalyses 3,4-dihydroxybenzaldehyde + NADP(+) + H2O = 3,4-dihydroxybenzoate + NADPH + 2 H(+). It carries out the reaction 4-hydroxybenzaldehyde + NAD(+) + H2O = 4-hydroxybenzoate + NADH + 2 H(+). It catalyses the reaction 4-hydroxybenzaldehyde + NADP(+) + H2O = 4-hydroxybenzoate + NADPH + 2 H(+). Functionally, catalyzes oxidation of vanillin to vanillate. Also oxidizes 3,4-dihydroxybenzaldehyde and 4-hydroxybenzaldehyde significantly. Other aromatic aldehyde substrates in the order of decreasing activity include 3-hydroxybenzaldehyde, 4-nitrobenzaldehyde, terephthalaldehyde, 2,4-dichlorobenzaldehyde, benzaldehyde and 3-phenylpropanal. Low activity with phthalaldehyde, cinnamaldehyde and syringaldehyde. No activity with phenylacetaldehyde, formaldehyde or aldehyde. Active with both NAD(+) and NADP(+). Involved in the degradation pathway of lignin-derived aromatic compounds of plant cell walls. Catalyzes the conversion of vanillin to vanillate due to toxicity of vanillin to the cells. The chain is Vanillin dehydrogenase from Corynebacterium glutamicum (strain ATCC 13032 / DSM 20300 / JCM 1318 / BCRC 11384 / CCUG 27702 / LMG 3730 / NBRC 12168 / NCIMB 10025 / NRRL B-2784 / 534).